Reading from the N-terminus, the 175-residue chain is Protein her-1 (175 aa).

An N-terminal signal peptide occupies residues 1–18; the sequence is MRYLPIFVFLGSFGYTET. N-linked (GlcNAc...) asparagine glycans are attached at residues Asn-98 and Asn-163.

It is found in the secreted. Dictates male development. Probably plays a direct role in cell signaling during C.elegans sex determination. Inhibits the function of tra-2a. The sequence is that of Protein her-1 (her-1) from Caenorhabditis elegans.